Consider the following 347-residue polypeptide: Major capsid protein (347 aa).

This sequence belongs to the baculoviridae major capsid protein family.

The protein resides in the virion. In terms of biological role, most abundant structural protein of the nucleocapsid produced during the infection cycle. The monomers are arranged in stacked rings around the nucleoprotein core. The chain is Major capsid protein (P39) from Autographa californica nuclear polyhedrosis virus (AcMNPV).